The following is a 471-amino-acid chain: MTGPTGAAVDGVARLGRVHLLGIGGVGMSGIARLLRGRGVEVSGTDAAPSPTLDRLRELGIRTRVGHDPAHLGDLGAGDTLVVSSAVRATNPELLAARERGVRVLHRSEALAALMAGRAGVAVAGTHGKTTTSSMLAVALTAAGLDPSYAIGGELTGGDDGGARDGSGPFVAEADESDGSFRAYAPVVDVVTNVEPDHLDHYGTAEAFAAAFEEFVDRLQPGGLLVACADDPGSAALAGHARGRGVRVRTYGASATADVRLRDLQPGAAASAVLVDGGVPRELRLAVPGEHNVLNAAAAYCAAVELGADPVAVLEGLARFGGARRRFELKGEAAGVRVVDDYAHHPTEVEALLRAARPVAGGGRVVVVFQPHLVSRTRAFAAEFGRALALADEVVVLDVYVAREDPDPEVTGALVADAVPLPAGRVRFLPDRSAAAGTLAATVRAGDLLLTVGAGDVTTVGPEVLNLLAER.

Residue G125–T131 coordinates ATP.

The protein belongs to the MurCDEF family.

Its subcellular location is the cytoplasm. It catalyses the reaction UDP-N-acetyl-alpha-D-muramate + L-alanine + ATP = UDP-N-acetyl-alpha-D-muramoyl-L-alanine + ADP + phosphate + H(+). It participates in cell wall biogenesis; peptidoglycan biosynthesis. Functionally, cell wall formation. This Kineococcus radiotolerans (strain ATCC BAA-149 / DSM 14245 / SRS30216) protein is UDP-N-acetylmuramate--L-alanine ligase.